The following is a 305-amino-acid chain: Alpha-N-acetylgalactosaminide alpha-2,6-sialyltransferase 3 (305 aa).

Residues 1–8 (MACILKRK) are Cytoplasmic-facing. A helical; Signal-anchor for type II membrane protein membrane pass occupies residues 9–29 (PALAVSFIALCILLLAMRLAN). Residues 30–305 (DVTFPLLLNC…VFTHPNWTVS (276 aa)) lie on the Lumenal side of the membrane. C80 and C229 form a disulfide bridge. N-linked (GlcNAc...) asparagine glycans are attached at residues N239 and N301.

Belongs to the glycosyltransferase 29 family. In adults it is highly expressed in spleen, followed by kidney and lesser in lung. Not found in liver and skeletal muscle. In newborns it is abundantly expressed in brain and kidney.

Its subcellular location is the golgi apparatus membrane. It catalyses the reaction an alpha-Neu5Ac-(2-&gt;3)-beta-D-Gal-(1-&gt;3)-D-GlcNAc derivative + CMP-N-acetyl-beta-neuraminate = an alpha-Neu5Ac-(2-&gt;3)-beta-D-Gal-(1-&gt;3)-[alpha-Neu5Ac-(2-&gt;6)]-D-GlcNAc derivative + CMP + H(+). The enzyme catalyses a ganglioside GM1b + CMP-N-acetyl-beta-neuraminate = a ganglioside GD1alpha + CMP + H(+). The catalysed reaction is a ganglioside GM1b (d18:1(4E)) + CMP-N-acetyl-beta-neuraminate = a ganglioside GD1alpha (d18:1(4E)) + CMP + H(+). It carries out the reaction a globoside MSGG + CMP-N-acetyl-beta-neuraminate = a globoside DSGG + CMP + H(+). It catalyses the reaction 3-O-[alpha-Neu5Ac-(2-&gt;3)-beta-D-Gal-(1-&gt;3)-alpha-D-GalNAc]-L-Ser-[protein] + CMP-N-acetyl-beta-neuraminate = a 3-O-{alpha-Neu5Ac-(2-&gt;3)-beta-D-Gal-(1-&gt;3)-[alpha-Neu5Ac-(2-&gt;6)]-alpha-D-GalNAc}-L-seryl-[protein] + CMP + H(+). The enzyme catalyses 3-O-[alpha-Neu5Ac-(2-&gt;3)-beta-D-Gal-(1-&gt;3)-alpha-D-GalNAc]-L-Thr-[protein] + CMP-N-acetyl-beta-neuraminate = a 3-O-{alpha-Neu5Ac-(2-&gt;3)-beta-D-Gal-(1-&gt;3)-[alpha-Neu5Ac-(2-&gt;6)]-alpha-D-GalNAc}-L-threonyl-[protein] + CMP + H(+). The protein operates within protein modification; protein glycosylation. It functions in the pathway glycolipid biosynthesis. Its function is as follows. Transfers the sialyl group (N-acetyl-alpha-neuraminyl or NeuAc) from CMP-NeuAc to the GalNAc residue on the NeuAc-alpha-2,3-Gal-beta-1,3-GalNAc sequence of glycoproteins and glycolipids forming an alpha-2,6-linkage. Produces branched type disialyl structures by transfer of a sialyl group onto a GalNAc residue inside the backbone core chains. ST6GalNAcIII prefers glycolipids to glycoproteins, predominantly catalyzing the biosynthesis of ganglioside GD1alpha from GM1b. GD1alpha is a critical molecule in the communication and interaction between neuronal cells and their supportive cells, particularly in brain tissues, and functions as an adhesion molecule in the process of metastasis. Sialylation of glycoproteins or glycosphingolipids is very important in tumor development, neuronal development, nerve repair, immunological processes and regulation of hormone sensitivity. This chain is Alpha-N-acetylgalactosaminide alpha-2,6-sialyltransferase 3 (St6galnac3), found in Rattus norvegicus (Rat).